The sequence spans 156 residues: PopC secretion inhibitor (156 aa).

A disordered region spans residues 1–89 (MNPGSAPWER…PVRSRAEVHQ (89 aa)). Residues 8 to 28 (WERRTRERMRAMSRKNGEWGD) show a composition bias toward basic and acidic residues.

In terms of assembly, interacts with PopC in non-starving cells.

It is found in the cytoplasm. With respect to regulation, in response to starvation, RelA is activated resulting in the accumulation of (p)ppGpp, which causes the degradation of PopD in an FtsH(D)-dependent manner, thereby releasing pre-formed PopC for secretion. In terms of biological role, inhibitor of protease PopC. In non-starving cells, forms a cytoplasmic complex with PopC and inhibits PopC secretion and activity. This Myxococcus xanthus (strain DK1622) protein is PopC secretion inhibitor.